The sequence spans 99 residues: Aspartyl/glutamyl-tRNA(Asn/Gln) amidotransferase subunit C (99 aa).

This sequence belongs to the GatC family. Heterotrimer of A, B and C subunits.

It catalyses the reaction L-glutamyl-tRNA(Gln) + L-glutamine + ATP + H2O = L-glutaminyl-tRNA(Gln) + L-glutamate + ADP + phosphate + H(+). The enzyme catalyses L-aspartyl-tRNA(Asn) + L-glutamine + ATP + H2O = L-asparaginyl-tRNA(Asn) + L-glutamate + ADP + phosphate + 2 H(+). Functionally, allows the formation of correctly charged Asn-tRNA(Asn) or Gln-tRNA(Gln) through the transamidation of misacylated Asp-tRNA(Asn) or Glu-tRNA(Gln) in organisms which lack either or both of asparaginyl-tRNA or glutaminyl-tRNA synthetases. The reaction takes place in the presence of glutamine and ATP through an activated phospho-Asp-tRNA(Asn) or phospho-Glu-tRNA(Gln). This chain is Aspartyl/glutamyl-tRNA(Asn/Gln) amidotransferase subunit C, found in Burkholderia ambifaria (strain MC40-6).